Consider the following 382-residue polypeptide: Innexin-8 (382 aa).

The next 4 helical transmembrane spans lie at 29-49 (LITA…TYVG), 103-123 (QWSS…KFLW), 187-207 (VIKI…AIFL), and 270-290 (IFLF…IAHF).

It belongs to the pannexin family.

It localises to the cell membrane. It is found in the cell junction. The protein resides in the gap junction. Its function is as follows. Structural component of the gap junctions. The protein is Innexin-8 (inx-8) of Caenorhabditis elegans.